Consider the following 201-residue polypeptide: Ubiquinone biosynthesis accessory factor UbiJ (201 aa).

Residues 15–112 form the SCP2 domain; sequence LNTFLYRSPA…QVVQNFVALA (98 aa).

It belongs to the UbiJ family. In terms of assembly, component of the Ubi complex metabolon, which regroups five ubiquinone biosynthesis proteins (UbiE, UbiF, UbiG, UbiH and UbiI) and two accessory factors (UbiK and the lipid-binding protein UbiJ). Interacts with UbiK and forms a complex composed of 2 UbiK subunits and 1 UbiJ subunit. The UbiK-UbiJ complex interacts with palmitoleic acid.

It is found in the cytoplasm. The protein operates within cofactor biosynthesis; ubiquinone biosynthesis. In terms of biological role, required for ubiquinone (coenzyme Q) biosynthesis under aerobic conditions. Binds hydrophobic ubiquinone biosynthetic intermediates via its SCP2 domain and is essential for the stability of the Ubi complex. May constitute a docking platform where Ubi enzymes assemble and access their SCP2-bound polyprenyl substrates. The sequence is that of Ubiquinone biosynthesis accessory factor UbiJ from Escherichia coli (strain K12).